The chain runs to 173 residues: Alpha-crystallin A chain (173 aa).

M1 is subject to N-acetylmethionine. A required for complex formation with BFSP1 and BFSP2 region spans residues 1–63 (MDVTIQHPWF…RTVLDSGISE (63 aa)). Deamidated glutamine; partial is present on Q6. Position 45 is a phosphoserine (S45). A Deamidated glutamine; partial modification is found at Q50. The sHSP domain occupies 52–162 (LFRTVLDSGI…GHSERAIPVS (111 aa)). An N6-acetyllysine modification is found at K70. Position 90 is a deamidated glutamine; partial (Q90). An N6-acetyllysine modification is found at K99. H100 serves as a coordination point for Zn(2+). N101 is subject to Deamidated asparagine; partial. Residues E102 and H107 each coordinate Zn(2+). S122 bears the Phosphoserine mark. Deamidated asparagine; partial is present on N123. Residues 145–173 (KVQSGLDAGHSERAIPVSREEKPSSAPSS) form a disordered region. Residue Q147 is modified to Deamidated glutamine; partial. Over residues 153-167 (GHSERAIPVSREEKP) the composition is skewed to basic and acidic residues. H154 provides a ligand contact to Zn(2+). The O-linked (GlcNAc) serine glycan is linked to S162.

It belongs to the small heat shock protein (HSP20) family. Heteromer composed of three CRYAA and one CRYAB subunits. Inter-subunit bridging via zinc ions enhances stability, which is crucial as there is no protein turn over in the lens. Can also form homodimers and homotetramers (dimers of dimers) which serve as the building blocks of homooligomers. Within homooligomers, the zinc-binding motif is created from residues of 3 different molecules. His-100 and Glu-102 from one molecule are ligands of the zinc ion, and His-107 and His-154 residues from additional molecules complete the site with tetrahedral coordination geometry. Part of a complex required for lens intermediate filament formation composed of BFSP1, BFSP2 and CRYAA. Acetylation at Lys-70 may increase chaperone activity. Post-translationally, undergoes age-dependent proteolytical cleavage at the C-terminus.

It localises to the cytoplasm. The protein localises to the nucleus. Contributes to the transparency and refractive index of the lens. Acts as a chaperone, preventing aggregation of various proteins under a wide range of stress conditions. Required for the correct formation of lens intermediate filaments as part of a complex composed of BFSP1, BFSP2 and CRYAA. This is Alpha-crystallin A chain (CRYAA) from Oryctolagus cuniculus (Rabbit).